A 261-amino-acid chain; its full sequence is MSETEAAPVVAPAAEAAPAAEAPKAKAPKAKAPKQPKAPKAPKEPKAPKEKKPKAAPTHPPYIEMVKDAITTLKERNGSSLPALKKFIENKYGKDIHDKNFAKTLSQVVKTFVKGGKLVKVKGSFKLSEALKAKAKKSTPKKAKADGEAKPKKSEAKPKKAEAVKKTKAPKEKVERPKKEKKEKVEKKKATPKAEKPKKAATPKSAGKKKATPKPKAAPKSPAKKDAKPKKATPSKKAAPKKAPAKKSTPKAKEAKSKGKK.

The span at 1–22 (MSETEAAPVVAPAAEAAPAAEA) shows a compositional bias: low complexity. Disordered stretches follow at residues 1–63 (MSET…PPYI) and 125–261 (FKLS…KGKK). Over residues 41 to 50 (APKEPKAPKE) the composition is skewed to basic and acidic residues. Positions 58-129 (THPPYIEMVK…KVKGSFKLSE (72 aa)) constitute an H15 domain. Residues 133-142 (AKAKKSTPKK) are compositionally biased toward basic residues. Repeat copies occupy residues 136-140 (KKSTP) and 188-192 (KKATP). The 7 X 5 AA repeats of K-K-[AS]-T-P stretch occupies residues 136–250 (KKSTPKKAKA…KKAPAKKSTP (115 aa)). Residues 139–142 (TPKK) mediate DNA binding. Residues 143–198 (AKADGEAKPKKSEAKPKKAEAVKKTKAPKEKVERPKKEKKEKVEKKKATPKAEKPK) are compositionally biased toward basic and acidic residues. Residues 199–203 (KAATP) form a 3; approximate repeat. Repeat copies occupy residues 209-213 (KKATP), 230-234 (KKATP), 236-240 (KKAAP), and 246-250 (KKSTP). A compositionally biased stretch (basic residues) spans 227–250 (AKPKKATPSKKAAPKKAPAKKSTP). The segment covering 251 to 261 (KAKEAKSKGKK) has biased composition (basic and acidic residues).

It belongs to the histone H1/H5 family.

The protein resides in the nucleus. The protein localises to the chromosome. Its function is as follows. Histones H1 are necessary for the condensation of nucleosome chains into higher-order structures. The sequence is that of Histone H1-I (H1-I) from Volvox carteri (Green alga).